A 462-amino-acid chain; its full sequence is L-seryl-tRNA(Sec) selenium transferase (462 aa).

K292 is modified (N6-(pyridoxal phosphate)lysine).

This sequence belongs to the SelA family. The cofactor is pyridoxal 5'-phosphate.

Its subcellular location is the cytoplasm. It carries out the reaction L-seryl-tRNA(Sec) + selenophosphate + H(+) = L-selenocysteinyl-tRNA(Sec) + phosphate. Its pathway is aminoacyl-tRNA biosynthesis; selenocysteinyl-tRNA(Sec) biosynthesis; selenocysteinyl-tRNA(Sec) from L-seryl-tRNA(Sec) (bacterial route): step 1/1. Converts seryl-tRNA(Sec) to selenocysteinyl-tRNA(Sec) required for selenoprotein biosynthesis. This Geobacter metallireducens (strain ATCC 53774 / DSM 7210 / GS-15) protein is L-seryl-tRNA(Sec) selenium transferase.